Here is a 243-residue protein sequence, read N- to C-terminus: Ubiquinone/menaquinone biosynthesis C-methyltransferase UbiE (243 aa).

S-adenosyl-L-methionine contacts are provided by residues T69, D90, and 116–117 (DA).

Belongs to the class I-like SAM-binding methyltransferase superfamily. MenG/UbiE family.

The catalysed reaction is a 2-demethylmenaquinol + S-adenosyl-L-methionine = a menaquinol + S-adenosyl-L-homocysteine + H(+). The enzyme catalyses a 2-methoxy-6-(all-trans-polyprenyl)benzene-1,4-diol + S-adenosyl-L-methionine = a 5-methoxy-2-methyl-3-(all-trans-polyprenyl)benzene-1,4-diol + S-adenosyl-L-homocysteine + H(+). The protein operates within quinol/quinone metabolism; menaquinone biosynthesis; menaquinol from 1,4-dihydroxy-2-naphthoate: step 2/2. Its pathway is cofactor biosynthesis; ubiquinone biosynthesis. Methyltransferase required for the conversion of demethylmenaquinol (DMKH2) to menaquinol (MKH2) and the conversion of 2-polyprenyl-6-methoxy-1,4-benzoquinol (DDMQH2) to 2-polyprenyl-3-methyl-6-methoxy-1,4-benzoquinol (DMQH2). This chain is Ubiquinone/menaquinone biosynthesis C-methyltransferase UbiE, found in Paraburkholderia phymatum (strain DSM 17167 / CIP 108236 / LMG 21445 / STM815) (Burkholderia phymatum).